We begin with the raw amino-acid sequence, 457 residues long: Siroheme synthase (457 aa).

The segment at 1-204 (MDHLPIFCQL…ADEKAVNATT (204 aa)) is precorrin-2 dehydrogenase /sirohydrochlorin ferrochelatase. NAD(+) contacts are provided by residues 22-23 (DV) and 43-44 (LT). Phosphoserine is present on Ser-128. The interval 216-457 (GEVVLVGAGP…RDKLNWFSNY (242 aa)) is uroporphyrinogen-III C-methyltransferase. Pro-225 contributes to the S-adenosyl-L-methionine binding site. Asp-248 serves as the catalytic Proton acceptor. Lys-270 functions as the Proton donor in the catalytic mechanism. S-adenosyl-L-methionine is bound by residues 301–303 (GGD), Ile-306, 331–332 (TA), Met-382, and Gly-411.

In the N-terminal section; belongs to the precorrin-2 dehydrogenase / sirohydrochlorin ferrochelatase family. It in the C-terminal section; belongs to the precorrin methyltransferase family.

It catalyses the reaction uroporphyrinogen III + 2 S-adenosyl-L-methionine = precorrin-2 + 2 S-adenosyl-L-homocysteine + H(+). The enzyme catalyses precorrin-2 + NAD(+) = sirohydrochlorin + NADH + 2 H(+). The catalysed reaction is siroheme + 2 H(+) = sirohydrochlorin + Fe(2+). It functions in the pathway cofactor biosynthesis; adenosylcobalamin biosynthesis; precorrin-2 from uroporphyrinogen III: step 1/1. It participates in cofactor biosynthesis; adenosylcobalamin biosynthesis; sirohydrochlorin from precorrin-2: step 1/1. Its pathway is porphyrin-containing compound metabolism; siroheme biosynthesis; precorrin-2 from uroporphyrinogen III: step 1/1. The protein operates within porphyrin-containing compound metabolism; siroheme biosynthesis; siroheme from sirohydrochlorin: step 1/1. It functions in the pathway porphyrin-containing compound metabolism; siroheme biosynthesis; sirohydrochlorin from precorrin-2: step 1/1. In terms of biological role, multifunctional enzyme that catalyzes the SAM-dependent methylations of uroporphyrinogen III at position C-2 and C-7 to form precorrin-2 via precorrin-1. Then it catalyzes the NAD-dependent ring dehydrogenation of precorrin-2 to yield sirohydrochlorin. Finally, it catalyzes the ferrochelation of sirohydrochlorin to yield siroheme. In Salmonella dublin (strain CT_02021853), this protein is Siroheme synthase.